The primary structure comprises 129 residues: Small ribosomal subunit protein eS8 (129 aa).

The disordered stretch occupies residues 1–29 (MSVWQGRSRRKPTGGLYRPARKKRKYEMG).

Belongs to the eukaryotic ribosomal protein eS8 family. As to quaternary structure, part of the 30S ribosomal subunit.

The polypeptide is Small ribosomal subunit protein eS8 (rps8e) (Methanocaldococcus jannaschii (strain ATCC 43067 / DSM 2661 / JAL-1 / JCM 10045 / NBRC 100440) (Methanococcus jannaschii)).